A 3414-amino-acid chain; its full sequence is Genome polyprotein (3414 aa).

Residues 1 to 27 form a disordered region; sequence MAGKAVLKGKGGGPPRRASKVAPKKTR. Residues 1–98 lie on the Cytoplasmic side of the membrane; it reads MAGKAVLKGK…LHRRGSRRTT (98 aa). The segment covering 17-27 has biased composition (basic residues); it reads RASKVAPKKTR. Positions 97-117 are cleaved as a propeptide — ER anchor for the capsid protein C, removed in mature form by serine protease NS3; it reads TTIDWMTPLLITVMLGMCLTA. A helical membrane pass occupies residues 99-117; that stretch reads IDWMTPLLITVMLGMCLTA. At 118–242 the chain is on the extracellular side; the sequence is TVRRERDGSM…HLTRVEGWVW (125 aa). Residue Asn-144 is glycosylated (N-linked (GlcNAc...) asparagine; by host). A helical membrane pass occupies residues 243 to 260; it reads KNKLFTLSLVMVAWLMVD. Position 261 (Gly-261) is a topological domain, cytoplasmic. The chain crosses the membrane as a helical span at residues 262–280; the sequence is LLPRILIVVVALALVPAYA. Residues 281–727 are Extracellular-facing; the sequence is SRCTHLENRD…HTVLGGAFNT (447 aa). Intrachain disulfides connect Cys-283–Cys-310, Cys-340–Cys-396, Cys-340–Cys-401, Cys-354–Cys-385, Cys-372–Cys-396, and Cys-372–Cys-401. The tract at residues 378 to 391 is fusion peptide; the sequence is DRGWGNHCGLFGKG. Asn-434 is a glycosylation site (N-linked (GlcNAc...) asparagine; by host). 2 disulfide bridges follow: Cys-466/Cys-570 and Cys-587/Cys-618. The helical transmembrane segment at 728–748 threads the bilayer; sequence LLGGVGFLPKILLGVAMAWLG. Over 749 to 755 the chain is Cytoplasmic; sequence LNMRNPT. Residues 756 to 776 form a helical membrane-spanning segment; the sequence is LSMGFLLSGGLVLAMTLGVGA. At 777–1187 the chain is on the extracellular side; the sequence is DVGCAVDTER…LVSVESLFRY (411 aa). 6 cysteine pairs are disulfide-bonded: Cys-780–Cys-791, Cys-831–Cys-920, Cys-955–Cys-1000, Cys-1057–Cys-1106, Cys-1068–Cys-1090, and Cys-1089–Cys-1093. N-linked (GlcNAc...) asparagine; by host glycans are attached at residues Asn-861, Asn-983, and Asn-999. A helical transmembrane segment spans residues 1188-1208; the sequence is LVAVGLVFQLELGPEAVAMVL. Topologically, residues 1209 to 1232 are cytoplasmic; that stretch reads LQAVFEMRTCLLSGFVLRRSITTR. The chain crosses the membrane as a helical span at residues 1233 to 1253; the sequence is EIVTVYFLLLVLEMGIPVKGL. The Lumenal segment spans residues 1254-1267; that stretch reads EHLWRWTDALAMGA. A helical transmembrane segment spans residues 1268 to 1288; that stretch reads IIFRACTAEGKTGIGLLLAAF. Residues 1289 to 1300 lie on the Cytoplasmic side of the membrane; sequence MTQSDMNIIHDG. Residues 1301 to 1319 traverse the membrane as a helical segment; that stretch reads LTAFLCVATTMAIWRYIRG. At 1320–1325 the chain is on the lumenal side; the sequence is QGERKG. Residues 1326-1346 traverse the membrane as a helical segment; that stretch reads LTWIVPLAGILGGEGSGVRLL. Residues 1347–1359 are Cytoplasmic-facing; it reads AFWELAASRGRRS. The helical transmembrane segment at 1360–1378 threads the bilayer; it reads FNEPMTVIGVMLTLASGMM. The Lumenal segment spans residues 1379–1382; sequence RHTS. Residues 1383-1403 traverse the membrane as a helical segment; that stretch reads QEAVCAMALAAFLLLMLTLGT. Residues 1404-1454 lie on the Cytoplasmic side of the membrane; the sequence is RKMQLLAEWSGNIEWNPELTSEGGEVSLRVRQDALGNLHLTELEKEERMMA. Positions 1410–1449 are interacts with and activates NS3 protease; that stretch reads AEWSGNIEWNPELTSEGGEVSLRVRQDALGNLHLTELEKE. The segment at residues 1455–1475 is an intramembrane region (helical); sequence FWLVVGLIASAFHWSGILIVM. At 1476–2160 the chain is on the cytoplasmic side; sequence GLWTISEMLG…RIGERDAPEA (685 aa). Residues 1490–1669 form the Peptidase S7 domain; the sequence is TDLVFSGCSE…EVEKSRPNLP (180 aa). Active-site charge relay system; for serine protease NS3 activity residues include His-1543, Asp-1567, and Ser-1627. The Helicase ATP-binding domain occupies 1675 to 1831; the sequence is TGWTAKGQIT…ESNGAIASEE (157 aa). 1688 to 1695 contacts ATP; it reads MHPGSGKT. Positions 1779–1782 match the DEAH box motif; sequence DEAH. In terms of domain architecture, Helicase C-terminal spans 1841 to 2000; sequence DGFDWITEYE…TARGPVATFY (160 aa). Lys-1883 is modified (N6-acetyllysine; by host). A helical transmembrane segment spans residues 2161 to 2181; the sequence is FLTAVEMLVLGLATLGVVWCF. At 2182–2189 the chain is on the lumenal side; sequence VVRTSVSR. Positions 2190–2209 form an intramembrane region, helical; that stretch reads MVLGTLVLATSLIFLWAGGV. Position 2210 (Gly-2210) is a topological domain, lumenal. A helical membrane pass occupies residues 2211 to 2231; it reads YGNMAGVALVFYTLLTVLQPE. The Cytoplasmic segment spans residues 2232-2238; it reads TGKQRSS. Residues 2239 to 2259 traverse the membrane as a helical segment; sequence DDNKLAYFLLTLCGLAGMVAA. Residues 2260 to 2296 are Lumenal-facing; the sequence is NEMGLLEKTKADLAALFARDQGETVRWGEWTNLDIQP. An intramembrane region (helical) is located at residues 2297 to 2315; the sequence is ARSWGTYVLVVSLFTPYML. Over 2316–2343 the chain is Lumenal; that stretch reads HQLQTRIQQLVNSAVASGAQAMRDLGGG. An intramembrane region (helical) is located at residues 2344 to 2364; sequence TPFFGVAGHVLALGVASLVGA. Residues 2365 to 2368 lie on the Lumenal side of the membrane; the sequence is TPTS. Residues 2369–2389 traverse the membrane as a helical segment; the sequence is LILGVGLAAFHLAIVVSGLEA. Residues 2390–2432 are Cytoplasmic-facing; it reads ELTQRAHKVFFSAMVRNPMVDGDVINPFGDGEAKPALYERKLS. The helical transmembrane segment at 2433–2453 threads the bilayer; that stretch reads LILALVLCLASVVMNRTFVAV. The Lumenal portion of the chain corresponds to 2454 to 2477; it reads TEAGAVGVAAAMQLLRPEMDVLWT. The chain crosses the membrane as a helical span at residues 2478–2498; it reads MPVACGMSGVVRGSLWGLLPL. Residues 2499–3414 are Cytoplasmic-facing; that stretch reads GHRLWLRTTG…WELKLESSIF (916 aa). The mRNA cap 0-1 NS5-type MT domain occupies 2512–2776; that stretch reads GGSEGDTLGD…EIDLGVGTRS (265 aa). Ser-2567 serves as a coordination point for S-adenosyl-L-methionine. Phosphoserine is present on Ser-2567. Residue Lys-2572 is the For 2'-O-MTase activity of the active site. S-adenosyl-L-methionine contacts are provided by Gly-2597, Trp-2598, Thr-2615, Ile-2616, Asp-2642, and Val-2643. The active-site For 2'-O-MTase activity is the Asp-2657. Ile-2658 contacts S-adenosyl-L-methionine. Active-site for 2'-O-MTase activity residues include Lys-2694 and Glu-2730. The segment at 2730–2734 is interaction with host SCRIB; the sequence is EMYFS. Residue Tyr-2732 coordinates S-adenosyl-L-methionine. Glu-2950, His-2954, Cys-2959, and Cys-2962 together coordinate Zn(2+). One can recognise a RdRp catalytic domain in the interval 3040 to 3189; it reads GLFYADDTAG…RPVDDRFSKA (150 aa). Residues His-3224, Cys-3240, and Cys-3359 each contribute to the Zn(2+) site.

In the N-terminal section; belongs to the class I-like SAM-binding methyltransferase superfamily. mRNA cap 0-1 NS5-type methyltransferase family. In terms of assembly, homodimer. Interacts (via N-terminus) with host EXOC1 (via C-terminus); this interaction results in EXOC1 degradation through the proteasome degradation pathway. As to quaternary structure, forms heterodimers with envelope protein E in the endoplasmic reticulum and Golgi. Homodimer; in the endoplasmic reticulum and Golgi. Interacts with protein prM. Interacts with non-structural protein 1. In terms of assembly, homodimer; Homohexamer when secreted. Interacts with envelope protein E. As to quaternary structure, interacts (via N-terminus) with serine protease NS3. Forms a heterodimer with serine protease NS3. May form homooligomers. In terms of assembly, forms a heterodimer with NS2B. Interacts with non-structural protein 2A (via N-terminus). Interacts with NS4B. Interacts with unphosphorylated RNA-directed RNA polymerase NS5; this interaction stimulates RNA-directed RNA polymerase NS5 guanylyltransferase activity. As to quaternary structure, interacts with serine protease NS3. Interacts with NS1. Homodimer. Interacts with host STAT2; this interaction inhibits the phosphorylation of the latter, and, when all viral proteins are present (polyprotein), targets STAT2 for degradation. Interacts with serine protease NS3. Interacts with host SCRIB; this interaction targets NS5 to the cell membrane periphery and nucleus, thereby allowing efficient host nuclear STAT1 inhibition. Post-translationally, specific enzymatic cleavages in vivo yield mature proteins. Cleavages in the lumen of endoplasmic reticulum are performed by host signal peptidase, whereas cleavages in the cytoplasmic side are performed by serine protease NS3. Signal cleavage at the 2K-4B site requires a prior NS3 protease-mediated cleavage at the 4A-2K site. In terms of processing, cleaved in post-Golgi vesicles by a host furin, releasing the mature small envelope protein M, and peptide pr. This cleavage is incomplete as up to 30% of viral particles still carry uncleaved prM. N-glycosylated. Post-translationally, N-glycosylated. The excreted form is glycosylated and this is required for efficient secretion of the protein from infected cells. In terms of processing, acetylated by host KAT5. Acetylation modulates NS3 RNA-binding and unwinding activities and plays an important positive role for viral replication. Phosphorylated on serines residues. This phosphorylation may trigger NS5 nuclear localization.

Its subcellular location is the virion. The protein resides in the host nucleus. It localises to the host cytoplasm. It is found in the host perinuclear region. The protein localises to the secreted. Its subcellular location is the virion membrane. The protein resides in the host endoplasmic reticulum membrane. The catalysed reaction is Selective hydrolysis of -Xaa-Xaa-|-Yaa- bonds in which each of the Xaa can be either Arg or Lys and Yaa can be either Ser or Ala.. The enzyme catalyses RNA(n) + a ribonucleoside 5'-triphosphate = RNA(n+1) + diphosphate. It carries out the reaction a ribonucleoside 5'-triphosphate + H2O = a ribonucleoside 5'-diphosphate + phosphate + H(+). It catalyses the reaction ATP + H2O = ADP + phosphate + H(+). The catalysed reaction is a 5'-end (5'-triphosphoguanosine)-ribonucleoside in mRNA + S-adenosyl-L-methionine = a 5'-end (N(7)-methyl 5'-triphosphoguanosine)-ribonucleoside in mRNA + S-adenosyl-L-homocysteine. The enzyme catalyses a 5'-end (N(7)-methyl 5'-triphosphoguanosine)-ribonucleoside in mRNA + S-adenosyl-L-methionine = a 5'-end (N(7)-methyl 5'-triphosphoguanosine)-(2'-O-methyl-ribonucleoside) in mRNA + S-adenosyl-L-homocysteine + H(+). Its function is as follows. Plays a role in virus budding by binding to membrane and gathering the viral RNA into a nucleocapsid that forms the core of a mature virus particle. During virus entry, may induce genome penetration in host cytoplasm after hemifusion induced by surface proteins. Can migrate to the cell nucleus where it modulates host functions. In terms of biological role, inhibits RNA silencing by interfering with host Dicer. Prevents premature fusion activity of envelope proteins in trans-Golgi by binding to envelope protein E at pH6.0. After virion release in extracellular space gets dissociated from E dimers. Functionally, acts as a chaperone for envelope protein E during intracellular virion assembly by masking and inactivating envelope protein E fusion peptide. prM is the only viral peptide matured by host furin in the trans-Golgi network. Presumably to avoid catastrophic activation of the viral fusion activity in acidic GolGi compartment prior to virion release. prM-E cleavage is ineficient, and many virions are only partially matured. These uncleaved prM would play a role in immune evasion. Its function is as follows. May play a role in virus budding. Exerts cytotoxic effects by activating a mitochondrial apoptotic pathway through M extodomain. May display a viroporin activity. In terms of biological role, binds to host cell surface receptor and mediates fusion between viral and cellular membranes. Envelope protein is synthesized in the endoplasmic reticulum in the form of heterodimer with protein prM. They play a role in virion budding in the ER, and the newly formed immature particle is covered with 60 spikes composed of heterodimer between precursor prM and envelope protein E. The virion is transported to the Golgi apparatus where the low pH causes dissociation of PrM-E heterodimers and formation of E homodimers. prM-E cleavage is ineficient, and many virions are only partially matured. These uncleaved prM would play a role in immune evasion. Involved in immune evasion, pathogenesis and viral replication. Once cleaved off the polyprotein, is targeted to three destinations: the viral replication cycle, the plasma membrane and the extracellular compartment. Essential for viral replication. Required for formation of the replication complex and recruitment of other non-structural proteins to the ER-derived membrane structures. Excreted as a hexameric lipoparticle that plays a role against host immune response. Antagonizing the complement function. Binds to the host macrophages and dendritic cells. Inhibits signal transduction originating from Toll-like receptor 3 (TLR3). Functionally, component of the viral RNA replication complex that functions in virion assembly and antagonizes the host immune response. Its function is as follows. Required cofactor for the serine protease function of NS3. May have membrane-destabilizing activity and form viroporins. In terms of biological role, displays three enzymatic activities: serine protease, NTPase and RNA helicase. NS3 serine protease, in association with NS2B, performs its autocleavage and cleaves the polyprotein at dibasic sites in the cytoplasm: C-prM, NS2A-NS2B, NS2B-NS3, NS3-NS4A, NS4A-2K and NS4B-NS5. NS3 RNA helicase binds RNA and unwinds dsRNA in the 3' to 5' direction. Regulates the ATPase activity of the NS3 helicase activity. NS4A allows NS3 helicase to conserve energy during unwinding. Functionally, functions as a signal peptide for NS4B and is required for the interferon antagonism activity of the latter. Its function is as follows. Induces the formation of ER-derived membrane vesicles where the viral replication takes place. Inhibits interferon (IFN)-induced host STAT1 phosphorylation and nuclear translocation, thereby preventing the establishment of cellular antiviral state by blocking the IFN-alpha/beta pathway. Inhibits STAT2 translocation in the nucleus after IFN-alpha treatment. In terms of biological role, replicates the viral (+) and (-) genome, and performs the capping of genomes in the cytoplasm. NS5 methylates viral RNA cap at guanine N-7 and ribose 2'-O positions. Besides its role in genome replication, also prevents the establishment of cellular antiviral state by blocking the interferon-alpha/beta (IFN-alpha/beta) signaling pathway. Inhibits host TYK2 and STAT2 phosphorylation, thereby preventing activation of JAK-STAT signaling pathway. The sequence is that of Genome polyprotein from Homo sapiens (Human).